The primary structure comprises 648 residues: 1-deoxy-D-xylulose-5-phosphate synthase (648 aa).

Thiamine diphosphate contacts are provided by residues His73 and 114 to 116; that span reads SHA. Residue Asp145 coordinates Mg(2+). Thiamine diphosphate contacts are provided by residues 146–147, Asn175, Tyr286, and Glu367; that span reads GA. A Mg(2+)-binding site is contributed by Asn175.

This sequence belongs to the transketolase family. DXPS subfamily. Homodimer. Mg(2+) serves as cofactor. It depends on thiamine diphosphate as a cofactor.

The catalysed reaction is D-glyceraldehyde 3-phosphate + pyruvate + H(+) = 1-deoxy-D-xylulose 5-phosphate + CO2. Its pathway is metabolic intermediate biosynthesis; 1-deoxy-D-xylulose 5-phosphate biosynthesis; 1-deoxy-D-xylulose 5-phosphate from D-glyceraldehyde 3-phosphate and pyruvate: step 1/1. Its function is as follows. Catalyzes the acyloin condensation reaction between C atoms 2 and 3 of pyruvate and glyceraldehyde 3-phosphate to yield 1-deoxy-D-xylulose-5-phosphate (DXP). In Rhodococcus erythropolis (strain PR4 / NBRC 100887), this protein is 1-deoxy-D-xylulose-5-phosphate synthase.